We begin with the raw amino-acid sequence, 696 residues long: DNA-directed RNA polymerase subunit beta' (696 aa).

The Zn(2+) site is built by C69, C71, C87, and C90. Mg(2+)-binding residues include D504, D506, and D508.

Belongs to the RNA polymerase beta' chain family. RpoC1 subfamily. In terms of assembly, in plastids the minimal PEP RNA polymerase catalytic core is composed of four subunits: alpha, beta, beta', and beta''. When a (nuclear-encoded) sigma factor is associated with the core the holoenzyme is formed, which can initiate transcription. Mg(2+) serves as cofactor. Requires Zn(2+) as cofactor.

It is found in the plastid. Its subcellular location is the chloroplast. It carries out the reaction RNA(n) + a ribonucleoside 5'-triphosphate = RNA(n+1) + diphosphate. Its function is as follows. DNA-dependent RNA polymerase catalyzes the transcription of DNA into RNA using the four ribonucleoside triphosphates as substrates. This chain is DNA-directed RNA polymerase subunit beta', found in Pinus koraiensis (Korean pine).